We begin with the raw amino-acid sequence, 209 residues long: N-(5'-phosphoribosyl)anthranilate isomerase (209 aa).

It belongs to the TrpF family.

The catalysed reaction is N-(5-phospho-beta-D-ribosyl)anthranilate = 1-(2-carboxyphenylamino)-1-deoxy-D-ribulose 5-phosphate. Its pathway is amino-acid biosynthesis; L-tryptophan biosynthesis; L-tryptophan from chorismate: step 3/5. This is N-(5'-phosphoribosyl)anthranilate isomerase from Erythrobacter litoralis (strain HTCC2594).